Consider the following 572-residue polypeptide: MPHVSRKEYSSLFGPTVGDKIRLGNTELFIEIEKDLRGYGDESVYGGGKSLRDGMGANNNLTRDNGVLDLVITNVTIIDACLGVIKADVGIKDGKISGIGKSGNPNTMDGVTPTMVVGASTDAISGEHLILTAAGIDTHIHLISPQQAYHALSNGVTTFFGGGIGPTDGSNGTTVTAGPWNIRQMLRSFESLPLNVGLLGKGNACGYGPLEEQIIAGAAGLKVHEDWGATASALRYALRIADKMDIQVAVHTDSLNEGGYVEDTIDAFEGRTVHTFHTEGAGGGHAPDIIKVASLMNVLPSSTNPTLPFGINSQAELFDMIMICHNLNPNVPADVAFAESRVRPETIAAENVLQDMGVISMFSSDSQAMGRVGENWLRLIQTANAMKVARGKLPEDAAGNDNFRVLRYVAKITINPAIAQGVSHVIGSIEVGKMADLVLWDPRFFGAKPKMVIKGGMISWSTMGDSNASLPTTQPITYRPMFGAMGKTMNDTCVTFVSQASLEDGVREKAGLDRNVIAVKNCRNVSKQDLVRNNNMPNIDVDPETFAVKVDGVHATCKPVDIAAMNQLYFFG.

One can recognise a Urease domain in the interval 134–572 (AGIDTHIHLI…AAMNQLYFFG (439 aa)). Ni(2+)-binding residues include histidine 139, histidine 141, and lysine 222. Lysine 222 carries the N6-carboxylysine modification. A substrate-binding site is contributed by histidine 224. Histidine 251 and histidine 277 together coordinate Ni(2+). Histidine 325 functions as the Proton donor in the catalytic mechanism. Residue aspartate 365 coordinates Ni(2+).

This sequence belongs to the metallo-dependent hydrolases superfamily. Urease alpha subunit family. As to quaternary structure, heterotrimer of UreA (gamma), UreB (beta) and UreC (alpha) subunits. Three heterotrimers associate to form the active enzyme. Ni cation serves as cofactor. In terms of processing, carboxylation allows a single lysine to coordinate two nickel ions.

The protein localises to the cytoplasm. It carries out the reaction urea + 2 H2O + H(+) = hydrogencarbonate + 2 NH4(+). Its pathway is nitrogen metabolism; urea degradation; CO(2) and NH(3) from urea (urease route): step 1/1. The chain is Urease subunit alpha from Edwardsiella ictaluri (strain 93-146).